Consider the following 185-residue polypeptide: Translocon-associated protein subunit gamma (185 aa).

N-acetylmethionine is present on Met-1. Over 1-27 (MAPKGGSKQQSEEDLLLQDFSRNLSAK) the chain is Lumenal. Ser-7 and Ser-11 each carry phosphoserine. The helical transmembrane segment at 28–48 (SSALFFGNAFIVSAIPIWLYW) threads the bilayer. Residues 49–54 (RIWHMD) are Cytoplasmic-facing. Residues 55 to 76 (LIQSAVLYSVMTLVSTYLVAFA) form a helical membrane-spanning segment. Over 77-135 (YKNVKFVLKHKVAQKREDAVSKEVTRKLSEADNRKMSRKEKDERILWKKNEVADYEATT) the chain is Lumenal. Ser-105 is subject to Phosphoserine. A helical transmembrane segment spans residues 136–157 (FSIFYNNTLFLVLVIVASFFIL). Residues 158–163 (KNFNPT) are Cytoplasmic-facing. The helical transmembrane segment at 164-184 (VNYILSISASSGLIALLSTGS) threads the bilayer.

This sequence belongs to the TRAP-gamma family. As to quaternary structure, heterotetramer of TRAP-alpha, TRAP-beta, TRAP-delta and TRAP-gamma.

The protein localises to the endoplasmic reticulum membrane. Functionally, TRAP proteins are part of a complex whose function is to bind calcium to the ER membrane and thereby regulate the retention of ER resident proteins. The polypeptide is Translocon-associated protein subunit gamma (Ssr3) (Mus musculus (Mouse)).